A 953-amino-acid polypeptide reads, in one-letter code: 26S proteasome non-ATPase regulatory subunit 1 (953 aa).

At methionine 1 the chain carries N-acetylmethionine; partial. At threonine 273 the chain carries Phosphothreonine. A disordered region spans residues 279-318; the sequence is PGSTNTGTVPGSEKDSDSMETEEKTGSAFVGKTPEASPEP. At serine 290 the chain carries Phosphoserine. Positions 290–303 are enriched in basic and acidic residues; sequence SEKDSDSMETEEKT. Lysine 310 is modified (N6-acetyllysine). Threonine 311 carries the post-translational modification Phosphothreonine. The residue at position 315 (serine 315) is a Phosphoserine. PC repeat units follow at residues 403 to 436, 441 to 474, 476 to 510, 511 to 545, 547 to 580, 581 to 616, 617 to 649, 651 to 685, 686 to 726, and 729 to 761; these read TATA…PGSA, GGLY…DIVR, GGSL…VTGE, AAGL…EKIL, GLAV…ILRR, SGMY…DVRR, AAVE…PHVR, GAAM…YVRQ, GALI…DVMA, and GAIL…PSVV. Lysine 720 carries the N6-acetyllysine modification. Threonine 830 carries the phosphothreonine modification. Position 834 is a phosphoserine (serine 834). Disordered stretches follow at residues 839-881 and 930-953; these read AKKK…LDNP and AHGP…YIDD. Basic and acidic residues-rich tracts occupy residues 842-852 and 859-872; these read KEKEKEKKEEE and AEKK…KEPE. Positions 936–953 are enriched in acidic residues; it reads EEEEQEPEPPEPFEYIDD.

The protein belongs to the proteasome subunit S1 family. In terms of assembly, component of the 19S proteasome regulatory particle complex. The 26S proteasome consists of a 20S core particle (CP) and two 19S regulatory subunits (RP). The regulatory particle is made of a lid composed of 9 subunits, a base containing 6 ATPases and few additional components including PSMD1. Interacts with ADRM1. Interacts with ZFAND1.

Component of the 26S proteasome, a multiprotein complex involved in the ATP-dependent degradation of ubiquitinated proteins. This complex plays a key role in the maintenance of protein homeostasis by removing misfolded or damaged proteins, which could impair cellular functions, and by removing proteins whose functions are no longer required. Therefore, the proteasome participates in numerous cellular processes, including cell cycle progression, apoptosis, or DNA damage repair. In Pongo abelii (Sumatran orangutan), this protein is 26S proteasome non-ATPase regulatory subunit 1 (PSMD1).